The chain runs to 646 residues: Galactofuranosyltransferase GlfT2 (646 aa).

Positions 182, 211, 240, and 267 each coordinate UDP-alpha-D-galactofuranose. Positions 267 and 269 each coordinate Mn(2+). The Proton acceptor role is filled by aspartate 384. Histidine 408 serves as a coordination point for Mn(2+).

The protein belongs to the glycosyltransferase 2 family. As to quaternary structure, homotetramer. The cofactor is Mn(2+). Mg(2+) serves as cofactor.

The protein resides in the cell membrane. The enzyme catalyses beta-D-galactofuranosyl-(1-&gt;5)-beta-D-galactofuranosyl-(1-&gt;4)-alpha-L-rhamnosyl-(1-&gt;3)-N-acetyl-alpha-D-glucosaminyl-diphospho-trans,octa-cis-decaprenol + 28 UDP-alpha-D-galactofuranose = [beta-D-galactofuranosyl-(1-&gt;5)-beta-D-galactofuranosyl-(1-&gt;6)]14-beta-D-galactofuranosyl-(1-&gt;5)-beta-D-galactofuranosyl-(1-&gt;4)-alpha-L-rhamnopyranosyl-(1-&gt;3)-N-acetyl-alpha-D-glucosaminyl-diphospho-trans,octa-cis-decaprenol + 28 UDP + 28 H(+). The protein operates within cell wall biogenesis; cell wall polysaccharide biosynthesis. Involved in the galactan polymerization of the arabinogalactan (AG) region of the mycolylarabinogalactan-peptidoglycan (mAGP) complex, an essential component of the mycobacteria cell wall. Thus, successively transfers approximately 28 galactofuranosyl (Galf) residues from UDP-galactofuranose (UDP-Galf) onto the galactofuranosyl-galactofuranosyl-rhamnosyl-GlcNAc-diphospho-decaprenol (Galf-Galf-Rha-GlcNAc-PP-C50) acceptor produced by GlfT1, with alternating 1-&gt;5 and 1-&gt;6 links, forming a galactan domain with approximately 30 galactofuranosyl residues. This is Galactofuranosyltransferase GlfT2 from Mycolicibacterium smegmatis (strain ATCC 700084 / mc(2)155) (Mycobacterium smegmatis).